The chain runs to 443 residues: tRNA-2-methylthio-N(6)-dimethylallyladenosine synthase (443 aa).

In terms of domain architecture, MTTase N-terminal spans 12 to 126 (KTFRVKSFGC…LPEMVADAAA (115 aa)). Residues C21, C57, C89, C162, C166, and C169 each contribute to the [4Fe-4S] cluster site. The Radical SAM core domain occupies 148–380 (RKSAPTAFLT…QAALNRDQLA (233 aa)). One can recognise a TRAM domain in the interval 383 to 443 (KASVGKTCEV…GPNSISGRLA (61 aa)).

This sequence belongs to the methylthiotransferase family. MiaB subfamily. As to quaternary structure, monomer. [4Fe-4S] cluster serves as cofactor.

Its subcellular location is the cytoplasm. It catalyses the reaction N(6)-dimethylallyladenosine(37) in tRNA + (sulfur carrier)-SH + AH2 + 2 S-adenosyl-L-methionine = 2-methylsulfanyl-N(6)-dimethylallyladenosine(37) in tRNA + (sulfur carrier)-H + 5'-deoxyadenosine + L-methionine + A + S-adenosyl-L-homocysteine + 2 H(+). Functionally, catalyzes the methylthiolation of N6-(dimethylallyl)adenosine (i(6)A), leading to the formation of 2-methylthio-N6-(dimethylallyl)adenosine (ms(2)i(6)A) at position 37 in tRNAs that read codons beginning with uridine. In Novosphingobium aromaticivorans (strain ATCC 700278 / DSM 12444 / CCUG 56034 / CIP 105152 / NBRC 16084 / F199), this protein is tRNA-2-methylthio-N(6)-dimethylallyladenosine synthase.